The sequence spans 778 residues: Probable cation-transporting ATPase exp7 (778 aa).

Residues 1–37 are Cytoplasmic-facing; that stretch reads MDKNKIMGLTQREVKERQAEGLVNDFTASASTSTWQI. Residues 38–57 traverse the membrane as a helical segment; it reads VKRNVFTLFNALNFAIALAL. Over 58-64 the chain is Extracellular; sequence AFVQAWS. A helical transmembrane segment spans residues 65–84; sequence NLVFFAVICFNAFSGIVTEL. Residues 85-209 are Cytoplasmic-facing; that stretch reads RAKHMVDKLN…PINSRIMKSL (125 aa). The helical transmembrane segment at 210-229 threads the bilayer; sequence DKLAGFTGKIIIPFGLALLL. Over 230-242 the chain is Extracellular; sequence EALLLKGLPLKSS. A helical membrane pass occupies residues 243–260; it reads VVNSSTALLGMLPKGIAL. Residues 261-586 are Cytoplasmic-facing; it reads LTITSLLTAV…FEGRRVVNNI (326 aa). The 4-aspartylphosphate intermediate role is filled by D298. Residues D532 and D536 each coordinate Mg(2+). Residues 587–606 traverse the membrane as a helical segment; the sequence is AHIAPIFLIKTIYSFLLAVI. At 607 to 624 the chain is on the extracellular side; the sequence is CIASALLGRSEWILIFPF. Residues 625 to 645 form a helical membrane-spanning segment; sequence IPIQITMIDQFVEGFPPFVLT. The Cytoplasmic portion of the chain corresponds to 646 to 663; that stretch reads FERNIKPVEQNFLRKSML. Residues 664–684 traverse the membrane as a helical segment; sequence RALPSALMVVFSVLFVKMFGA. At 685-689 the chain is on the extracellular side; that stretch reads SQGWS. The chain crosses the membrane as a helical span at residues 690–708; it reads ELEISTLLYYLLGSIGFLS. Topologically, residues 709 to 716 are cytoplasmic; it reads VFRACMPF. The chain crosses the membrane as a helical span at residues 717–739; sequence TLWRVLLIVWSVGGFLATALFPR. Residues 740–757 are Extracellular-facing; the sequence is IQKLLEISTLTEQTLPVY. The chain crosses the membrane as a helical span at residues 758 to 777; the sequence is GVMMLVFTVIFILTSRYQAK. Residue K778 is a topological domain, cytoplasmic.

Belongs to the cation transport ATPase (P-type) (TC 3.A.3) family.

It is found in the cell membrane. It carries out the reaction ATP + H2O = ADP + phosphate + H(+). The chain is Probable cation-transporting ATPase exp7 (exp7) from Streptococcus pneumoniae serotype 4 (strain ATCC BAA-334 / TIGR4).